We begin with the raw amino-acid sequence, 191 residues long: Small ribosomal subunit protein uS4A (191 aa).

Phosphoserine is present on residues serine 50 and serine 161. Residues 107-181 (RRLQTQVFKL…CKRKRLRSQE (75 aa)) enclose the S4 RNA-binding domain. Position 164 is a phosphotyrosine (tyrosine 164). The disordered stretch occupies residues 166-191 (GGRPGRCKRKRLRSQEGGEGEEAEEE). Position 179 is a phosphoserine (serine 179).

It belongs to the universal ribosomal protein uS4 family. As to quaternary structure, component of the small ribosomal subunit (SSU). Mature yeast ribosomes consist of a small (40S) and a large (60S) subunit. The 40S small subunit contains 1 molecule of ribosomal RNA (18S rRNA) and at least 33 different proteins. The large 60S subunit contains 3 rRNA molecules (25S, 5.8S and 5S rRNA) and at least 46 different proteins. Interacts with snoRNA U3. uS11 interacts with MPP10. Component of the ribosomal small subunit (SSU) processome composed of at least 40 protein subunits and snoRNA U3.

It localises to the cytoplasm. In terms of biological role, component of the ribosome, a large ribonucleoprotein complex responsible for the synthesis of proteins in the cell. The small ribosomal subunit (SSU) binds messenger RNAs (mRNAs) and translates the encoded message by selecting cognate aminoacyl-transfer RNA (tRNA) molecules. The large subunit (LSU) contains the ribosomal catalytic site termed the peptidyl transferase center (PTC), which catalyzes the formation of peptide bonds, thereby polymerizing the amino acids delivered by tRNAs into a polypeptide chain. The nascent polypeptides leave the ribosome through a tunnel in the LSU and interact with protein factors that function in enzymatic processing, targeting, and the membrane insertion of nascent chains at the exit of the ribosomal tunnel. uS4 is involved in nucleolar processing of pre-18S ribosomal RNA and ribosome assembly. This chain is Small ribosomal subunit protein uS4A (rps901), found in Schizosaccharomyces pombe (strain 972 / ATCC 24843) (Fission yeast).